A 283-amino-acid polypeptide reads, in one-letter code: uncharacterized protein (283 aa).

A signal peptide spans 1 to 23 (MFAFASFAISAIFFLCSFSYVSS).

The protein localises to the secreted. This is an uncharacterized protein from Schizosaccharomyces pombe (strain 972 / ATCC 24843) (Fission yeast).